Here is a 272-residue protein sequence, read N- to C-terminus: MICOS complex subunit MIC27 (272 aa).

The transit peptide at 1–24 (MAAKVARLAAAASSLPFVCAVYAE) directs the protein to the mitochondrion. Over 28-107 (SKSQLVKPKQ…YVYLKNPPPD (80 aa)) the chain is Mitochondrial intermembrane. A helical transmembrane segment spans residues 108–126 (FLPRVGIITISGLAGVVLA). The Mitochondrial matrix portion of the chain corresponds to 127-134 (RKDSRFKK). The helical transmembrane segment at 135 to 152 (IAYPLGLTTLGISVCYPA) threads the bilayer. Over 153–272 (QAVVIAKITG…EDVDMYSTRS (120 aa)) the chain is Mitochondrial intermembrane. Residues 187-272 (SKLQQESKSV…EDVDMYSTRS (86 aa)) are disordered. Composition is skewed to polar residues over residues 188–198 (KLQQESKSVTQ) and 206–245 (ISNVQFESAIESRSSNRTESSPIESWSTKDPLPSSGTVKT).

The protein belongs to the apolipoprotein O/MICOS complex subunit Mic27 family. In terms of assembly, component of the mitochondrial contact site and cristae organizing system (MICOS) complex (also known as MINOS or MitOS complex).

The protein resides in the mitochondrion inner membrane. Its function is as follows. Component of the MICOS complex, a large protein complex of the mitochondrial inner membrane that plays crucial roles in the maintenance of crista junctions, inner membrane architecture, and formation of contact sites to the outer membrane. The polypeptide is MICOS complex subunit MIC27 (APOOL) (Gallus gallus (Chicken)).